Reading from the N-terminus, the 185-residue chain is MVEAGDFRRGLTIEYDGQIFQVIEFLHVKPGKGAAFVRTKLKNIKTGAVIEKTFRPDERMPLAHIERREMQYLYNDGELYYFMDTQTYEQIALNQEMVGDALKFVKENMTVTILSHNGSVFGVEPPRFVELEVIDTEPGFKGDTQTGATKPAKVETGAVIQVPLFINVGDKIKIDTSTEEYLSRV.

Belongs to the elongation factor P family.

It is found in the cytoplasm. Its pathway is protein biosynthesis; polypeptide chain elongation. Its function is as follows. Involved in peptide bond synthesis. Stimulates efficient translation and peptide-bond synthesis on native or reconstituted 70S ribosomes in vitro. Probably functions indirectly by altering the affinity of the ribosome for aminoacyl-tRNA, thus increasing their reactivity as acceptors for peptidyl transferase. This chain is Elongation factor P, found in Caldicellulosiruptor saccharolyticus (strain ATCC 43494 / DSM 8903 / Tp8T 6331).